The chain runs to 637 residues: 1-deoxy-D-xylulose-5-phosphate synthase (637 aa).

Residues histidine 71 and 112–114 (SHA) each bind thiamine diphosphate. Aspartate 144 contacts Mg(2+). Thiamine diphosphate is bound by residues 145 to 146 (GA), asparagine 173, tyrosine 284, and glutamate 365. Mg(2+) is bound at residue asparagine 173.

It belongs to the transketolase family. DXPS subfamily. Homodimer. It depends on Mg(2+) as a cofactor. The cofactor is thiamine diphosphate.

The enzyme catalyses D-glyceraldehyde 3-phosphate + pyruvate + H(+) = 1-deoxy-D-xylulose 5-phosphate + CO2. Its pathway is metabolic intermediate biosynthesis; 1-deoxy-D-xylulose 5-phosphate biosynthesis; 1-deoxy-D-xylulose 5-phosphate from D-glyceraldehyde 3-phosphate and pyruvate: step 1/1. Functionally, catalyzes the acyloin condensation reaction between C atoms 2 and 3 of pyruvate and glyceraldehyde 3-phosphate to yield 1-deoxy-D-xylulose-5-phosphate (DXP). The protein is 1-deoxy-D-xylulose-5-phosphate synthase of Mycobacterium ulcerans (strain Agy99).